Here is a 629-residue protein sequence, read N- to C-terminus: tRNA uridine 5-carboxymethylaminomethyl modification enzyme MnmG (629 aa).

Position 13-18 (13-18 (GGGHAG)) interacts with FAD. Residue 273–287 (GPRYCPSIEDKITRF) participates in NAD(+) binding.

Belongs to the MnmG family. Homodimer. Heterotetramer of two MnmE and two MnmG subunits. It depends on FAD as a cofactor.

The protein resides in the cytoplasm. NAD-binding protein involved in the addition of a carboxymethylaminomethyl (cmnm) group at the wobble position (U34) of certain tRNAs, forming tRNA-cmnm(5)s(2)U34. The sequence is that of tRNA uridine 5-carboxymethylaminomethyl modification enzyme MnmG from Aeromonas salmonicida (strain A449).